The primary structure comprises 267 residues: Phosphate import ATP-binding protein PstB 2 (267 aa).

An ABC transporter domain is found at 21-262 (LATKDLHVYY…AQCQSTNDYV (242 aa)). 53-60 (GPSGCGKS) contributes to the ATP binding site.

This sequence belongs to the ABC transporter superfamily. Phosphate importer (TC 3.A.1.7) family. In terms of assembly, the complex is composed of two ATP-binding proteins (PstB), two transmembrane proteins (PstC and PstA) and a solute-binding protein (PstS).

The protein localises to the cell membrane. The catalysed reaction is phosphate(out) + ATP + H2O = ADP + 2 phosphate(in) + H(+). Functionally, part of the ABC transporter complex PstSACB involved in phosphate import. Responsible for energy coupling to the transport system. The polypeptide is Phosphate import ATP-binding protein PstB 2 (Streptococcus pyogenes serotype M18 (strain MGAS8232)).